Here is a 47-residue protein sequence, read N- to C-terminus: Large ribosomal subunit protein eL40 (47 aa).

It belongs to the eukaryotic ribosomal protein eL40 family.

The chain is Large ribosomal subunit protein eL40 from Methanococcus aeolicus (strain ATCC BAA-1280 / DSM 17508 / OCM 812 / Nankai-3).